The sequence spans 142 residues: Large ribosomal subunit protein bL19 (142 aa).

The protein belongs to the bacterial ribosomal protein bL19 family.

This protein is located at the 30S-50S ribosomal subunit interface and may play a role in the structure and function of the aminoacyl-tRNA binding site. The chain is Large ribosomal subunit protein bL19 from Rickettsia bellii (strain OSU 85-389).